A 351-amino-acid chain; its full sequence is UDP-3-O-acylglucosamine N-acyltransferase (351 aa).

Histidine 240 acts as the Proton acceptor in catalysis.

It belongs to the transferase hexapeptide repeat family. LpxD subfamily. Homotrimer.

It catalyses the reaction a UDP-3-O-[(3R)-3-hydroxyacyl]-alpha-D-glucosamine + a (3R)-hydroxyacyl-[ACP] = a UDP-2-N,3-O-bis[(3R)-3-hydroxyacyl]-alpha-D-glucosamine + holo-[ACP] + H(+). The protein operates within bacterial outer membrane biogenesis; LPS lipid A biosynthesis. Catalyzes the N-acylation of UDP-3-O-acylglucosamine using 3-hydroxyacyl-ACP as the acyl donor. Is involved in the biosynthesis of lipid A, a phosphorylated glycolipid that anchors the lipopolysaccharide to the outer membrane of the cell. In Pseudomonas fluorescens (strain ATCC BAA-477 / NRRL B-23932 / Pf-5), this protein is UDP-3-O-acylglucosamine N-acyltransferase.